Consider the following 625-residue polypeptide: Endoglucanase 13 (625 aa).

An N-terminal signal peptide occupies residues 1 to 34; that stretch reads MAATMNKTPATTFLLIPAAASLVLLLAAAASVEA. Asp-91 serves as the catalytic Nucleophile. His-427 is a catalytic residue. N-linked (GlcNAc...) asparagine glycosylation is present at Asn-440. Catalysis depends on residues Asp-479 and Glu-488. The tract at residues 509 to 530 is disordered; sequence ADNTPEYTPAPNAPSPSNGGSP.

Belongs to the glycosyl hydrolase 9 (cellulase E) family.

Its subcellular location is the secreted. The enzyme catalyses Endohydrolysis of (1-&gt;4)-beta-D-glucosidic linkages in cellulose, lichenin and cereal beta-D-glucans.. The chain is Endoglucanase 13 (GLU6) from Oryza sativa subsp. indica (Rice).